The sequence spans 110 residues: Chloride intracellular channel protein 1 (110 aa).

Alanine 2 carries the N-acetylalanine modification. Positions 2–90 are required for insertion into the membrane; sequence AEEQPQVELF…EEFLEAVLCP (89 aa). At lysine 13 the chain carries N6-acetyllysine. The G-site motif lies at 24–27; sequence CPFS. Cysteine 24 and cysteine 59 are oxidised to a cystine. Residues 26–46 form a helical membrane-spanning segment; it reads FSQRLFMVLWLKGVTFNVTTV.

Belongs to the chloride channel CLIC family. As to quaternary structure, monomer. Homodimer (in vitro). Interacts with TRAPPC2. Dimerization requires a conformation change that leads to the exposure of a large hydrophobic surface. In vivo, this may lead to membrane insertion.

It is found in the nucleus. The protein resides in the nucleus membrane. The protein localises to the cytoplasm. Its subcellular location is the cell membrane. It localises to the endoplasmic reticulum. It catalyses the reaction L-dehydroascorbate + 2 glutathione = glutathione disulfide + L-ascorbate. It carries out the reaction chloride(in) = chloride(out). The catalysed reaction is iodide(out) = iodide(in). The enzyme catalyses thiocyanate(in) = thiocyanate(out). It catalyses the reaction nitrate(in) = nitrate(out). It carries out the reaction bromide(in) = bromide(out). The catalysed reaction is fluoride(in) = fluoride(out). In the soluble state, catalyzes glutaredoxin-like thiol disulfide exchange reactions with reduced glutathione as electron donor. Reduces selenite and dehydroascorbate and may act as an antioxidant during oxidative stress response. Can insert into membranes and form voltage-dependent multi-ion conductive channels. Membrane insertion seems to be redox-regulated and may occur only under oxidizing conditions. Involved in regulation of the cell cycle. The chain is Chloride intracellular channel protein 1 (CLIC1) from Sus scrofa (Pig).